A 427-amino-acid chain; its full sequence is Glutamate-1-semialdehyde 2,1-aminomutase (427 aa).

K265 is modified (N6-(pyridoxal phosphate)lysine).

Belongs to the class-III pyridoxal-phosphate-dependent aminotransferase family. HemL subfamily. As to quaternary structure, homodimer. It depends on pyridoxal 5'-phosphate as a cofactor.

Its subcellular location is the cytoplasm. It catalyses the reaction (S)-4-amino-5-oxopentanoate = 5-aminolevulinate. Its pathway is porphyrin-containing compound metabolism; protoporphyrin-IX biosynthesis; 5-aminolevulinate from L-glutamyl-tRNA(Glu): step 2/2. This is Glutamate-1-semialdehyde 2,1-aminomutase from Pseudomonas putida (strain ATCC 47054 / DSM 6125 / CFBP 8728 / NCIMB 11950 / KT2440).